A 537-amino-acid chain; its full sequence is Beta-galactoside alpha-2,6-sialyltransferase 2 (537 aa).

The Cytoplasmic segment spans residues M1–R10. A helical; Signal-anchor for type II membrane protein membrane pass occupies residues L11 to L31. Over D32–I537 the chain is Lumenal. Disordered stretches follow at residues T83 to I117 and G134 to S202. Polar residues predominate over residues G134–V145. Acidic residues predominate over residues E166–V185. 3 cysteine pairs are disulfide-bonded: C265-C535, C312-C464, and C482-C493. Residues N353 and N373 are each glycosylated (N-linked (GlcNAc...) asparagine).

The protein belongs to the glycosyltransferase 29 family.

It localises to the golgi apparatus. The protein resides in the golgi stack membrane. It carries out the reaction a beta-D-galactoside + CMP-N-acetyl-beta-neuraminate = an N-acetyl-alpha-neuraminyl-(2-&gt;6)-beta-D-galactosyl derivative + CMP + H(+). Transfers sialic acid from the donor of substrate CMP-sialic acid to galactose containing acceptor substrates. This chain is Beta-galactoside alpha-2,6-sialyltransferase 2 (st6gal2), found in Takifugu rubripes (Japanese pufferfish).